A 212-amino-acid polypeptide reads, in one-letter code: Fe/S biogenesis protein NfuA (212 aa).

The [4Fe-4S] cluster site is built by C169 and C172.

It belongs to the NfuA family. As to quaternary structure, homodimer. [4Fe-4S] cluster serves as cofactor.

Its function is as follows. Involved in iron-sulfur cluster biogenesis. Binds a 4Fe-4S cluster, can transfer this cluster to apoproteins, and thereby intervenes in the maturation of Fe/S proteins. Could also act as a scaffold/chaperone for damaged Fe/S proteins. This chain is Fe/S biogenesis protein NfuA, found in Acinetobacter baylyi (strain ATCC 33305 / BD413 / ADP1).